The primary structure comprises 448 residues: Probable glucuronoxylan glucuronosyltransferase IRX7 (448 aa).

Topologically, residues 1-16 (MTTHKHRRTEKNLCFK) are cytoplasmic. Residues 17–37 (QYYKWILCFILTLYFFASFFV) traverse the membrane as a helical; Signal-anchor for type II membrane protein segment. The Lumenal segment spans residues 38–448 (DHDQDHRSST…RSVRRSNSFL (411 aa)). N157, N189, N287, N397, and N438 each carry an N-linked (GlcNAc...) asparagine glycan.

This sequence belongs to the glycosyltransferase 47 family. In terms of tissue distribution, expressed in developing interfascicular fibers and xylem cells in stems and developing secondary xylem in roots.

The protein resides in the golgi apparatus membrane. Involved in the synthesis of the hemicellulose glucuronoxylan, a major component of secondary cell walls. Probably involved in the synthesis of the glycosyl sequence at the glucuronoxylan reducing end. The chain is Probable glucuronoxylan glucuronosyltransferase IRX7 (IRX7) from Arabidopsis thaliana (Mouse-ear cress).